A 234-amino-acid polypeptide reads, in one-letter code: Enolase-phosphatase E1 (234 aa).

Asp-10 and Glu-12 together coordinate Mg(2+). Substrate is bound by residues 125–126 (SS) and Lys-162. Asp-188 is a Mg(2+) binding site.

The protein belongs to the HAD-like hydrolase superfamily. MasA/MtnC family. As to quaternary structure, monomer. Mg(2+) is required as a cofactor.

Its subcellular location is the cytoplasm. The protein localises to the nucleus. The catalysed reaction is 5-methylsulfanyl-2,3-dioxopentyl phosphate + H2O = 1,2-dihydroxy-5-(methylsulfanyl)pent-1-en-3-one + phosphate. It functions in the pathway amino-acid biosynthesis; L-methionine biosynthesis via salvage pathway; L-methionine from S-methyl-5-thio-alpha-D-ribose 1-phosphate: step 3/6. Its pathway is amino-acid biosynthesis; L-methionine biosynthesis via salvage pathway; L-methionine from S-methyl-5-thio-alpha-D-ribose 1-phosphate: step 4/6. In terms of biological role, bifunctional enzyme that catalyzes the enolization of 2,3-diketo-5-methylthiopentyl-1-phosphate (DK-MTP-1-P) into the intermediate 2-hydroxy-3-keto-5-methylthiopentenyl-1-phosphate (HK-MTPenyl-1-P), which is then dephosphorylated to form the acireductone 1,2-dihydroxy-3-keto-5-methylthiopentene (DHK-MTPene). This chain is Enolase-phosphatase E1 (utr4), found in Neurospora crassa (strain ATCC 24698 / 74-OR23-1A / CBS 708.71 / DSM 1257 / FGSC 987).